Reading from the N-terminus, the 326-residue chain is Glyoxylate/hydroxypyruvate reductase B (326 aa).

Residues R237 and E266 contribute to the active site. Residue H285 is the Proton donor of the active site.

Belongs to the D-isomer specific 2-hydroxyacid dehydrogenase family. GhrB subfamily. As to quaternary structure, homodimer.

It localises to the cytoplasm. The catalysed reaction is glycolate + NADP(+) = glyoxylate + NADPH + H(+). The enzyme catalyses (R)-glycerate + NAD(+) = 3-hydroxypyruvate + NADH + H(+). It catalyses the reaction (R)-glycerate + NADP(+) = 3-hydroxypyruvate + NADPH + H(+). Catalyzes the NADPH-dependent reduction of glyoxylate and hydroxypyruvate into glycolate and glycerate, respectively. The protein is Glyoxylate/hydroxypyruvate reductase B of Yersinia enterocolitica serotype O:8 / biotype 1B (strain NCTC 13174 / 8081).